We begin with the raw amino-acid sequence, 432 residues long: Probable D-serine dehydratase (432 aa).

The residue at position 112 (K112) is an N6-(pyridoxal phosphate)lysine.

Belongs to the serine/threonine dehydratase family. DsdA subfamily. Pyridoxal 5'-phosphate is required as a cofactor.

It carries out the reaction D-serine = pyruvate + NH4(+). The protein is Probable D-serine dehydratase of Pediococcus pentosaceus (strain ATCC 25745 / CCUG 21536 / LMG 10740 / 183-1w).